The chain runs to 252 residues: Ureidoacrylate amidohydrolase RutB (252 aa).

Residues 1–14 show a composition bias toward polar residues; that stretch reads MSTPARNTTLTSNT. The disordered stretch occupies residues 1–31; the sequence is MSTPARNTTLTSNTPAGAPRLPGAPAPQVLP. The segment covering 15–27 has biased composition (low complexity); it reads PAGAPRLPGAPAP. The active-site Proton acceptor is Asp50. The active site involves Lys159. Cys192 functions as the Nucleophile in the catalytic mechanism.

The protein belongs to the isochorismatase family. RutB subfamily.

The catalysed reaction is (Z)-3-ureidoacrylate + H2O + H(+) = (Z)-3-aminoacrylate + NH4(+) + CO2. The enzyme catalyses (Z)-3-ureidoacrylate + H2O = (Z)-3-aminoacrylate + carbamate + H(+). It carries out the reaction (Z)-2-methylureidoacrylate + H2O + H(+) = (Z)-2-methylaminoacrylate + NH4(+) + CO2. In terms of biological role, hydrolyzes ureidoacrylate to form aminoacrylate and carbamate. The carbamate hydrolyzes spontaneously, thereby releasing one of the nitrogen atoms of the pyrimidine ring as ammonia and one of its carbon atoms as CO2. The sequence is that of Ureidoacrylate amidohydrolase RutB from Variovorax paradoxus (strain S110).